We begin with the raw amino-acid sequence, 50 residues long: uncharacterized protein (50 aa).

Residues Met1–Lys50 form a disordered region. Residues Gly35 to Lys50 show a composition bias toward polar residues.

This is an uncharacterized protein from Treponema pallidum (strain Nichols).